A 311-amino-acid polypeptide reads, in one-letter code: Bifunctional protein FolD (311 aa).

NADP(+) is bound at residue 174–176; sequence GKG.

The protein belongs to the tetrahydrofolate dehydrogenase/cyclohydrolase family. In terms of assembly, homodimer.

The enzyme catalyses (6R)-5,10-methylene-5,6,7,8-tetrahydrofolate + NADP(+) = (6R)-5,10-methenyltetrahydrofolate + NADPH. It catalyses the reaction (6R)-5,10-methenyltetrahydrofolate + H2O = (6R)-10-formyltetrahydrofolate + H(+). It functions in the pathway one-carbon metabolism; tetrahydrofolate interconversion. Its function is as follows. Catalyzes the oxidation of 5,10-methylenetetrahydrofolate to 5,10-methenyltetrahydrofolate and then the hydrolysis of 5,10-methenyltetrahydrofolate to 10-formyltetrahydrofolate. The sequence is that of Bifunctional protein FolD from Pyrobaculum aerophilum (strain ATCC 51768 / DSM 7523 / JCM 9630 / CIP 104966 / NBRC 100827 / IM2).